The following is a 1073-amino-acid chain: Receptor-type guanylate cyclase gcy-23 (1073 aa).

Positions 1–15 (MRRELFIFLLLLGEC) are cleaved as a signal peptide. The Extracellular segment spans residues 16–458 (ANVKVKVGHI…FRNEKCDYTT (443 aa)). Asn336 carries an N-linked (GlcNAc...) asparagine glycan. The helical transmembrane segment at 459 to 479 (LIIGGCIVLLIILLIICFFIL) threads the bilayer. The Cytoplasmic portion of the chain corresponds to 480-1073 (SRVCENRALA…QQQNFSQLGI (594 aa)). Positions 508 to 808 (MKSMLSIGSS…RVRLNTENYL (301 aa)) constitute a Protein kinase domain. Positions 813-844 (SLVDQMMRMMEQYANNLEKLVAERTGMLEEAN) form a coiled coil. The Guanylate cyclase domain maps to 878-1008 (TVMFSDIVGF…DTVNVASRME (131 aa)). The Mg(2+) site is built by Asp883, Ile884, and Asp927.

Belongs to the adenylyl cyclase class-4/guanylyl cyclase family. In terms of tissue distribution, expressed specifically in AFD sensory neurons.

It localises to the cell membrane. Its subcellular location is the cell projection. The protein resides in the cilium. The catalysed reaction is GTP = 3',5'-cyclic GMP + diphosphate. In terms of biological role, guanylate cyclase involved in the production of the second messenger cGMP. Regulates thermotaxis responses in AFD sensory neurons. May regulate AFD neuronal activity such as calcium responses to temperature gradients. The protein is Receptor-type guanylate cyclase gcy-23 of Caenorhabditis elegans.